The chain runs to 318 residues: Ribosomal RNA small subunit methyltransferase H (318 aa).

S-adenosyl-L-methionine contacts are provided by residues 37–39 (GGH), Asp56, Tyr83, Asp104, and Gln111. The interval 293-318 (EEEIAENRRAAPARLRGAQRIREDAE) is disordered.

The protein belongs to the methyltransferase superfamily. RsmH family.

The protein resides in the cytoplasm. The catalysed reaction is cytidine(1402) in 16S rRNA + S-adenosyl-L-methionine = N(4)-methylcytidine(1402) in 16S rRNA + S-adenosyl-L-homocysteine + H(+). Functionally, specifically methylates the N4 position of cytidine in position 1402 (C1402) of 16S rRNA. In Streptomyces avermitilis (strain ATCC 31267 / DSM 46492 / JCM 5070 / NBRC 14893 / NCIMB 12804 / NRRL 8165 / MA-4680), this protein is Ribosomal RNA small subunit methyltransferase H.